A 572-amino-acid chain; its full sequence is Glutamate--tRNA ligase (572 aa).

Residues 112 to 122 (PNPNGPPSLGN) carry the 'HIGH' region motif.

The protein belongs to the class-I aminoacyl-tRNA synthetase family. Glutamate--tRNA ligase type 2 subfamily.

It localises to the cytoplasm. The enzyme catalyses tRNA(Glu) + L-glutamate + ATP = L-glutamyl-tRNA(Glu) + AMP + diphosphate. In terms of biological role, catalyzes the attachment of glutamate to tRNA(Glu) in a two-step reaction: glutamate is first activated by ATP to form Glu-AMP and then transferred to the acceptor end of tRNA(Glu). In Methanocella arvoryzae (strain DSM 22066 / NBRC 105507 / MRE50), this protein is Glutamate--tRNA ligase.